Here is a 447-residue protein sequence, read N- to C-terminus: Secretin receptor (447 aa).

The first 28 residues, 1–28 (MLSTMSPRLSLLLLWLLLLINAAHPVGA), serve as a signal peptide directing secretion. At 29–140 (LPRLCDVRRV…NERRHAYLLK (112 aa)) the chain is on the extracellular side. 3 disulfide bridges follow: Cys-46–Cys-74, Cys-65–Cys-106, and Cys-88–Cys-122. N-linked (GlcNAc...) asparagine glycans are attached at residues Asn-71, Asn-99, Asn-105, and Asn-127. Residues 141–166 (LKVMYTVGYSSSLAMLLVALSILCSF) form a helical membrane-spanning segment. Residues 167 to 173 (RRLHCTR) lie on the Cytoplasmic side of the membrane. A helical membrane pass occupies residues 174–194 (NYIHMHLFVSFILRALSNFIK). The Extracellular segment spans residues 195–215 (DAVLFPADDVTYCDAHRAGCK). Cys-214 and Cys-284 are oxidised to a cystine. The helical transmembrane segment at 216-238 (LVMIFFQYCIMANYAWLLVEGLY) threads the bilayer. Residues 239–253 (LHTLLAISFFSERKC) are Cytoplasmic-facing. The helical transmembrane segment at 254 to 275 (LQAFVLFGWGSPAIFVALWAVT) threads the bilayer. The Extracellular segment spans residues 276 to 290 (RHFLEDFGCWDINSN). Asn-290 carries N-linked (GlcNAc...) asparagine glycosylation. The helical transmembrane segment at 291–314 (ASIWWVIRGPVILSIVINFIFFIN) threads the bilayer. The Cytoplasmic segment spans residues 315 to 339 (ILRILMRKLRTQETRGNETHHYKRL). Residues 340–355 (AKSTLLLIPLFGIHYI) form a helical membrane-spanning segment. Residues 356–366 (VFAFSPEGAME) are Extracellular-facing. A helical membrane pass occupies residues 367-390 (VQLFFELALGSFQGLVVAVLYCFL). Residues 391 to 447 (NGELEVQKKWRQWHLQEFPLRPVALSNSFSNATNGPTHSTKAGTSEQSRSIPGANVI) are Cytoplasmic-facing. A compositionally biased stretch (polar residues) spans 423-440 (TNGPTHSTKAGTSEQSRS). The tract at residues 423 to 447 (TNGPTHSTKAGTSEQSRSIPGANVI) is disordered.

It belongs to the G-protein coupled receptor 2 family. In terms of processing, phosphorylated on Ser and Thr residues at the cytoplasmic C-terminus by G protein-coupled receptor kinases (GRKs). In brain, expressed in the hippocampal CA1 region, the lower layer of cerebral cortex, the anterior olfactory nuclei, the anterior ventrolateral thalamus, the lateral region of hypothalamus, substantia nigra, tegmental area and central nucleus of the inferior colliculus, the ventral supramamillary nucleus and the cerebellum. Expressed in brown adipocytes: expression predominates in mature brown adipocytes (at protein level). Detected in the renal medulla, where it localized predominantly on the basolateral membranes of cells in the collecting ducts (blue arrow) and the ascending thick segments of the loop of Henle.

Its subcellular location is the cell membrane. It localises to the basolateral cell membrane. G protein-coupled receptor activated by secretin (SCT), which is involved in different processes such as regulation of the pH of the duodenal content, food intake and water homeostasis. Ligand binding causes a conformation change that triggers signaling via guanine nucleotide-binding proteins (G proteins) and activates cAMP-dependent pathway. Upon binding to secretin, regulates the pH of the duodenum by (1) inhibiting the secretion of gastric acid from the parietal cells of the stomach and (2) stimulating the production of bicarbonate (NaHCO(3)) from the ductal cells of the pancreas. In addition to regulating the pH of the duodenal content, plays a central role in diet induced thermogenesis: acts as a non-sympathetic brown fat (BAT) activator mediating prandial thermogenesis, which consequentially induces satiation. Mechanistically, secretin released by the gut after a meal binds to secretin receptor (SCTR) in brown adipocytes, activating brown fat thermogenesis by stimulating lipolysis, which is sensed in the brain and promotes satiation. Also able to stimulate lipolysis in white adipocytes. Also plays an important role in cellular osmoregulation by regulating renal water reabsorption. Also plays a role in the central nervous system: required for synaptic plasticity. This chain is Secretin receptor, found in Mus musculus (Mouse).